Here is a 160-residue protein sequence, read N- to C-terminus: Transcriptional repressor NrdR (160 aa).

A zinc finger spans residues 3 to 34; it reads CPFCGHADTQVVDSRVSEEGDTIRRRRRCLSC. The ATP-cone domain occupies 49 to 139; sequence PTVVKRDGSR…VYKSFEDIGE (91 aa).

This sequence belongs to the NrdR family. The cofactor is Zn(2+).

Negatively regulates transcription of bacterial ribonucleotide reductase nrd genes and operons by binding to NrdR-boxes. The sequence is that of Transcriptional repressor NrdR from Bordetella avium (strain 197N).